The sequence spans 428 residues: Arabinosyltransferase RRA2 (428 aa).

Residues 1–15 (MAGRRDRIQQLRGSR) lie on the Cytoplasmic side of the membrane. A helical; Signal-anchor for type II membrane protein membrane pass occupies residues 16–36 (IAIAIFVGILIGCVCSVLFPN). Residues 37 to 428 (GFFNSGSSLI…ALDSFPDGSD (392 aa)) lie on the Lumenal side of the membrane. Residues 250-252 (DVD) carry the DXD motif motif. Asn278 is a glycosylation site (N-linked (GlcNAc...) asparagine).

This sequence belongs to the glycosyltransferase 77 family. As to expression, expressed in roots, rosette and cauline leaves, stems, flowers and siliques.

The protein resides in the golgi apparatus membrane. Its function is as follows. Plays a role in the arabinosylation of cell wall components. Involved in the arabinosylation of extensin proteins in root hair cells. Extensins are structural glycoproteins present in cell walls and its arabinosylation is important for root hair cell development. The protein is Arabinosyltransferase RRA2 of Arabidopsis thaliana (Mouse-ear cress).